A 102-amino-acid chain; its full sequence is Small ribosomal subunit protein uS10 (102 aa).

Belongs to the universal ribosomal protein uS10 family. As to quaternary structure, part of the 30S ribosomal subunit.

In terms of biological role, involved in the binding of tRNA to the ribosomes. This Clostridium novyi (strain NT) protein is Small ribosomal subunit protein uS10.